The chain runs to 182 residues: UPF0398 protein lwe1908 (182 aa).

Belongs to the UPF0398 family.

The sequence is that of UPF0398 protein lwe1908 from Listeria welshimeri serovar 6b (strain ATCC 35897 / DSM 20650 / CCUG 15529 / CIP 8149 / NCTC 11857 / SLCC 5334 / V8).